The sequence spans 247 residues: Uridylate kinase (247 aa).

19 to 22 (KISG) contributes to the ATP binding site. UMP is bound at residue Gly61. Positions 62 and 66 each coordinate ATP. Residues Asp81 and 142–149 (TGNPFFTT) contribute to the UMP site. ATP contacts are provided by Thr169, Gln170, Tyr175, and Asp178.

It belongs to the UMP kinase family. In terms of assembly, homohexamer.

The protein localises to the cytoplasm. The catalysed reaction is UMP + ATP = UDP + ADP. It participates in pyrimidine metabolism; CTP biosynthesis via de novo pathway; UDP from UMP (UMPK route): step 1/1. With respect to regulation, inhibited by UTP. In terms of biological role, catalyzes the reversible phosphorylation of UMP to UDP. This Wolbachia pipientis wMel protein is Uridylate kinase.